Reading from the N-terminus, the 211-residue chain is Imidazole glycerol phosphate synthase subunit HisH (211 aa).

In terms of domain architecture, Glutamine amidotransferase type-1 spans 3–211; the sequence is VIAVVDYEMG…VAQVREKIPA (209 aa). Residue C81 is the Nucleophile of the active site. Residues H186 and E188 contribute to the active site.

In terms of assembly, heterodimer of HisH and HisF.

Its subcellular location is the cytoplasm. It carries out the reaction 5-[(5-phospho-1-deoxy-D-ribulos-1-ylimino)methylamino]-1-(5-phospho-beta-D-ribosyl)imidazole-4-carboxamide + L-glutamine = D-erythro-1-(imidazol-4-yl)glycerol 3-phosphate + 5-amino-1-(5-phospho-beta-D-ribosyl)imidazole-4-carboxamide + L-glutamate + H(+). The catalysed reaction is L-glutamine + H2O = L-glutamate + NH4(+). It functions in the pathway amino-acid biosynthesis; L-histidine biosynthesis; L-histidine from 5-phospho-alpha-D-ribose 1-diphosphate: step 5/9. IGPS catalyzes the conversion of PRFAR and glutamine to IGP, AICAR and glutamate. The HisH subunit catalyzes the hydrolysis of glutamine to glutamate and ammonia as part of the synthesis of IGP and AICAR. The resulting ammonia molecule is channeled to the active site of HisF. This chain is Imidazole glycerol phosphate synthase subunit HisH, found in Nostoc punctiforme (strain ATCC 29133 / PCC 73102).